The primary structure comprises 406 residues: Cytochrome P450 165C4 (406 aa).

Cys-356 provides a ligand contact to heme.

Belongs to the cytochrome P450 family. Heme is required as a cofactor.

Its pathway is antibiotic biosynthesis; vancomycin biosynthesis. Its function is as follows. Involved in the coupling of aromatic side chains of the heptapeptide of vancomycin. The chain is Cytochrome P450 165C4 (cyp165C4) from Amycolatopsis orientalis (Nocardia orientalis).